The following is a 914-amino-acid chain: Alanine--tRNA ligase (914 aa).

His613, His617, Cys717, and His721 together coordinate Zn(2+).

The protein belongs to the class-II aminoacyl-tRNA synthetase family. Zn(2+) is required as a cofactor.

Its subcellular location is the cytoplasm. The catalysed reaction is tRNA(Ala) + L-alanine + ATP = L-alanyl-tRNA(Ala) + AMP + diphosphate. In terms of biological role, catalyzes the attachment of alanine to tRNA(Ala) in a two-step reaction: alanine is first activated by ATP to form Ala-AMP and then transferred to the acceptor end of tRNA(Ala). Also edits incorrectly charged Ser-tRNA(Ala) and Gly-tRNA(Ala) via its editing domain. The protein is Alanine--tRNA ligase of Pyrococcus abyssi (strain GE5 / Orsay).